A 92-amino-acid polypeptide reads, in one-letter code: Large ribosomal subunit protein bL31 (92 aa).

A disordered region spans residues 66 to 92 (GMGSANPDVDAPAPKKAAKKSDAESDS). A compositionally biased stretch (low complexity) spans 70-80 (ANPDVDAPAPK).

Belongs to the bacterial ribosomal protein bL31 family. Type A subfamily. In terms of assembly, part of the 50S ribosomal subunit.

Its function is as follows. Binds the 23S rRNA. This Synechococcus sp. (strain RCC307) protein is Large ribosomal subunit protein bL31.